A 98-amino-acid chain; its full sequence is uncharacterized protein (98 aa).

In terms of domain architecture, STAS spans 1–85 (MLETVPVRCV…GTLKQALENM (85 aa)).

Phosphorylated on threonine residue(s). Phosphorylated by PrkC and dephosphorylated by PrpC.

It is found in the cytoplasm. This is an uncharacterized protein from Bacillus subtilis (strain 168).